Consider the following 467-residue polypeptide: Asparagine--tRNA ligase (467 aa).

It belongs to the class-II aminoacyl-tRNA synthetase family. In terms of assembly, homodimer.

Its subcellular location is the cytoplasm. It catalyses the reaction tRNA(Asn) + L-asparagine + ATP = L-asparaginyl-tRNA(Asn) + AMP + diphosphate + H(+). The polypeptide is Asparagine--tRNA ligase (Protochlamydia amoebophila (strain UWE25)).